The primary structure comprises 391 residues: Acetyl-CoA acetyltransferase (391 aa).

The Acyl-thioester intermediate role is filled by Cys88. Active-site proton acceptor residues include His347 and Cys377.

The protein belongs to the thiolase-like superfamily. Thiolase family. As to quaternary structure, homotetramer.

It localises to the cytoplasm. The enzyme catalyses 2 acetyl-CoA = acetoacetyl-CoA + CoA. It participates in metabolic intermediate biosynthesis; (R)-mevalonate biosynthesis; (R)-mevalonate from acetyl-CoA: step 1/3. The protein is Acetyl-CoA acetyltransferase (phaA) of Paracoccus denitrificans.